The chain runs to 106 residues: Urease subunit beta (106 aa).

This sequence belongs to the urease beta subunit family. In terms of assembly, heterotrimer of UreA (gamma), UreB (beta) and UreC (alpha) subunits. Three heterotrimers associate to form the active enzyme.

The protein localises to the cytoplasm. The catalysed reaction is urea + 2 H2O + H(+) = hydrogencarbonate + 2 NH4(+). It participates in nitrogen metabolism; urea degradation; CO(2) and NH(3) from urea (urease route): step 1/1. The polypeptide is Urease subunit beta (Synechococcus sp. (strain CC9605)).